The primary structure comprises 281 residues: Leukocyte antigen CD37 (281 aa).

The Cytoplasmic portion of the chain corresponds to Met-1–Val-17. A helical membrane pass occupies residues Phe-18–Ile-38. Residues Asp-39–Lys-59 are Extracellular-facing. Residues Val-60–Leu-74 form a helical membrane-spanning segment. Residues Gly-75–Cys-85 are Cytoplasmic-facing. Residues Leu-86–Gln-111 traverse the membrane as a helical segment. Residues Arg-112–Asn-241 lie on the Extracellular side of the membrane. Residues Asn-170, Asn-183, and Asn-188 are each glycosylated (N-linked (GlcNAc...) asparagine). A helical transmembrane segment spans residues Leu-242–Leu-266. The Cytoplasmic portion of the chain corresponds to Cys-267 to Arg-281.

This sequence belongs to the tetraspanin (TM4SF) family. Interacts with SCIMP. Interacts with SOCS3. Interacts with DECTIN1/CLEC7A. In terms of processing, tyrosine phosphorylated; leading to activation of downstream signaling pathways. As to expression, B-lymphocytes. Antigen presenting cells.

It is found in the cell membrane. Structural component of specialized membrane microdomains known as tetraspanin-enriched microdomains (TERMs), which act as platforms for receptor clustering and signaling. Participates thereby in diverse biological functions such as cell signal transduction, adhesion, migration and protein trafficking. Upon ligand binding, two signaling pathways are activated, one acting through phosphorylation by LYN leading to cell death or a survival pathway with activation of GSK3B. Plays an essential role essential for clustering of integrin ITGA4/ITGB1 and promotes its mobility in the plasma membrane of B-cells. In turn, participates in ITGA4/ITGB1 integrin-mediated antiapoptotic signaling through AKT. Also plays a role in the migration of dendritic cells and neutrophils to draining lymph nodes, as well as in their integrin-mediated adhesion. Negatively regulates IL-6 responses through direct interaction with SOCS3 thereby preventing constitutive IL-6 signaling. Alternatively, inhibition of IL-6 signaling can also occur via interaction and stabilization of DECTIN1/CLEC7A at the cell membrane to inhibit its ability to promote the production of IL-6. This Homo sapiens (Human) protein is Leukocyte antigen CD37 (CD37).